Here is a 273-residue protein sequence, read N- to C-terminus: Ribosomal RNA small subunit methyltransferase A (273 aa).

S-adenosyl-L-methionine contacts are provided by N18, L20, G45, E66, D91, and N113.

It belongs to the class I-like SAM-binding methyltransferase superfamily. rRNA adenine N(6)-methyltransferase family. RsmA subfamily.

It is found in the cytoplasm. The enzyme catalyses adenosine(1518)/adenosine(1519) in 16S rRNA + 4 S-adenosyl-L-methionine = N(6)-dimethyladenosine(1518)/N(6)-dimethyladenosine(1519) in 16S rRNA + 4 S-adenosyl-L-homocysteine + 4 H(+). Its function is as follows. Specifically dimethylates two adjacent adenosines (A1518 and A1519) in the loop of a conserved hairpin near the 3'-end of 16S rRNA in the 30S particle. May play a critical role in biogenesis of 30S subunits. The chain is Ribosomal RNA small subunit methyltransferase A from Enterobacter sp. (strain 638).